Reading from the N-terminus, the 44-residue chain is Conotoxin S5.1 (44 aa).

Post-translationally, contains 3 disulfide bonds. In terms of tissue distribution, expressed by the venom duct.

It is found in the secreted. In Conus striatus (Striated cone), this protein is Conotoxin S5.1.